A 641-amino-acid chain; its full sequence is PWWP domain-containing DNA repair factor 3A (641 aa).

A disordered region spans residues 98–329 (LNERQGSSSR…LEEDEDDEEP (232 aa)). Ser-156 is subject to Phosphoserine. Composition is skewed to basic and acidic residues over residues 194–203 (QDREASRKQQ) and 295–307 (ADTR…RPLS). Residue Ser-307 is modified to Phosphoserine. Positions 343–404 (VGMLVWHKYQ…KHFDCKEKQA (62 aa)) constitute a PWWP domain. A disordered region spans residues 463–486 (TRFPQLSGGDPEEPVAGSPQGRRP).

Belongs to the PWWP3A family. Interacts with TP53BP1 (via BRCT domain); the interaction is not dependent on its phosphorylation status. Binds nucleosomes. Interacts with trimethylated 'Lys-36' of histone H3 (H3K36me3) (in vitro).

It localises to the nucleus. Functionally, involved in the DNA damage response pathway by contributing to the maintenance of chromatin architecture. Recruited to the vicinity of DNA breaks by TP53BP1 and plays an accessory role to facilitate damage-induced chromatin changes and promoting chromatin relaxation. Required for efficient DNA repair and cell survival following DNA damage. In Bos taurus (Bovine), this protein is PWWP domain-containing DNA repair factor 3A (PWWP3A).